The following is a 204-amino-acid chain: Small ribosomal subunit protein uS3 (204 aa).

One can recognise a KH type-2 domain in the interval 37 to 105 (IRSYINESFK…NVEVNVVGVK (69 aa)).

It belongs to the universal ribosomal protein uS3 family. In terms of assembly, part of the 30S ribosomal subunit. Forms a tight complex with proteins S10 and S14.

Functionally, binds the lower part of the 30S subunit head. Binds mRNA in the 70S ribosome, positioning it for translation. The sequence is that of Small ribosomal subunit protein uS3 from Wolbachia pipientis wMel.